Consider the following 198-residue polypeptide: Recombination protein RecR (198 aa).

Residues 57–72 form a C4-type zinc finger; sequence CEKCNTFTEAQICEVC. The region spanning 80–175 is the Toprim domain; sequence TLLCVVETPA…AVTRLARGVP (96 aa).

The protein belongs to the RecR family.

Functionally, may play a role in DNA repair. It seems to be involved in an RecBC-independent recombinational process of DNA repair. It may act with RecF and RecO. This chain is Recombination protein RecR, found in Burkholderia cenocepacia (strain HI2424).